The sequence spans 153 residues: Peptide deformylase (153 aa).

Fe cation contacts are provided by C87 and H129. Residue E130 is part of the active site. A Fe cation-binding site is contributed by H133.

It belongs to the polypeptide deformylase family. Fe(2+) is required as a cofactor.

The catalysed reaction is N-terminal N-formyl-L-methionyl-[peptide] + H2O = N-terminal L-methionyl-[peptide] + formate. In terms of biological role, removes the formyl group from the N-terminal Met of newly synthesized proteins. Requires at least a dipeptide for an efficient rate of reaction. N-terminal L-methionine is a prerequisite for activity but the enzyme has broad specificity at other positions. The protein is Peptide deformylase of Dictyoglomus thermophilum (strain ATCC 35947 / DSM 3960 / H-6-12).